The chain runs to 555 residues: Phosphomethylpyrimidine synthase (555 aa).

Residues N191, M220, Y249, H285, 305-307 (SRG), 346-349 (DGLR), and E385 each bind substrate. Position 389 (H389) interacts with Zn(2+). Y412 provides a ligand contact to substrate. H453 is a Zn(2+) binding site. C533, C536, and C541 together coordinate [4Fe-4S] cluster.

It belongs to the ThiC family. As to quaternary structure, homodimer. It depends on [4Fe-4S] cluster as a cofactor.

It catalyses the reaction 5-amino-1-(5-phospho-beta-D-ribosyl)imidazole + S-adenosyl-L-methionine = 4-amino-2-methyl-5-(phosphooxymethyl)pyrimidine + CO + 5'-deoxyadenosine + formate + L-methionine + 3 H(+). It participates in cofactor biosynthesis; thiamine diphosphate biosynthesis. Its function is as follows. Catalyzes the synthesis of the hydroxymethylpyrimidine phosphate (HMP-P) moiety of thiamine from aminoimidazole ribotide (AIR) in a radical S-adenosyl-L-methionine (SAM)-dependent reaction. In Ehrlichia ruminantium (strain Gardel), this protein is Phosphomethylpyrimidine synthase.